Here is a 2678-residue protein sequence, read N- to C-terminus: Mediator of RNA polymerase II transcription subunit 13 (2678 aa).

Disordered stretches follow at residues 1-52, 140-285, 495-524, 553-615, 852-993, 1070-1253, 1278-1394, 1462-1502, 1806-1838, 2075-2105, 2225-2307, and 2656-2678; these read MMGT…GYNS, SKKP…QPIS, NSNNIINNNNNSNINNNINNNNNQQQQQQQ, QQQQ…NNNI, SPSS…QQQQ, TSHY…KPFL, LPHN…QDES, SPFS…NNHH, FSGSSGLNNSNDRNSMIPMDNSDDTSDLMSMDD, QNQNQNQNSNSNESQQQQQQQSNNKQKQTQT, SSSS…QEQK, and KLTPNSKQSPSPINSPHLNSNNT. Composition is skewed to low complexity over residues 15–48, 144–162, and 169–186; these read SGSNAGGNVNNNNNGPNINNPNNPNNTNSLPTTS, INNSSNNSNITSSTSTDSS, and NSPSETTPPNTTNNNSNN. The span at 187–206 shows a compositional bias: polar residues; sequence VTKDSPPNATNKMSTSPKSL. Positions 207–276 are enriched in low complexity; the sequence is SPTISNNNNN…SPPTVASVTS (70 aa). Low complexity-rich tracts occupy residues 553–573 and 587–615; these read QQQQTINNNSNNISSNNDNNN and SSSSSSTPSQVTMQTTPTQEFSNNNNNNI. Residues 855–872 are compositionally biased toward polar residues; the sequence is SPLTQHPSSPHSPFNNVN. Residues 901–916 show a composition bias toward basic residues; the sequence is KKRHGKSQKKGRSSKR. Positions 922–950 are enriched in low complexity; it reads SNNNNNNNTTTTSTITATTTTTTPTAATT. 2 stretches are compositionally biased toward polar residues: residues 966–979 and 1079–1090; these read NIQETSQPQSLTTV and PTQNGSQKNNQR. Positions 1109–1150 are enriched in low complexity; that stretch reads TTTTTTTTTTTPTPNPTTTTTQPQTQPQQQSQQQQQPQQTNP. Over residues 1151–1195 the composition is skewed to polar residues; the sequence is ILPTNSNLITNQKPQQYQPPLQDPFQSIDSQQPKSIQSPTLTNQP. Residues 1201 to 1211 show a composition bias toward low complexity; that stretch reads PTLTNQPLQQY. Over residues 1281-1306 the composition is skewed to polar residues; that stretch reads NTEQSPSNDDLSNPNHLHHGTPTSAI. The segment covering 1312–1321 has biased composition (low complexity); sequence SSSSSGNNMI. Residues 1322-1343 show a composition bias toward gly residues; it reads GSGGIVGSGGGNTNVSGSGGGM. Basic residues predominate over residues 1359-1371; sequence PHHHHHHHHHHHP. Residues 1475-1497 show a composition bias toward low complexity; the sequence is TTTNNNNNHNNNNNNNHPNNHHQ. Polar residues predominate over residues 1806–1819; sequence FSGSSGLNNSNDRN. The span at 2658–2678 shows a compositional bias: polar residues; it reads TPNSKQSPSPINSPHLNSNNT.

Belongs to the Mediator complex subunit 13 family. Component of the Mediator complex.

The protein resides in the nucleus. Functionally, component of the Mediator complex, a coactivator involved in the regulated transcription of nearly all RNA polymerase II-dependent genes. Mediator functions as a bridge to convey information from gene-specific regulatory proteins to the basal RNA polymerase II transcription machinery. Mediator is recruited to promoters by direct interactions with regulatory proteins and serves as a scaffold for the assembly of a functional preinitiation complex with RNA polymerase II and the general transcription factors. Required for the starvation-induced activation of the ACA (adenylyl cyclase) expression pathway at the growth/differentiation transition. The chain is Mediator of RNA polymerase II transcription subunit 13 (amiB) from Dictyostelium discoideum (Social amoeba).